The following is a 171-amino-acid chain: Large ribosomal subunit protein uL10 (171 aa).

Belongs to the universal ribosomal protein uL10 family. As to quaternary structure, part of the ribosomal stalk of the 50S ribosomal subunit. The N-terminus interacts with L11 and the large rRNA to form the base of the stalk. The C-terminus forms an elongated spine to which L12 dimers bind in a sequential fashion forming a multimeric L10(L12)X complex.

In terms of biological role, forms part of the ribosomal stalk, playing a central role in the interaction of the ribosome with GTP-bound translation factors. This chain is Large ribosomal subunit protein uL10 (rplJ), found in Lactococcus lactis subsp. lactis (strain IL1403) (Streptococcus lactis).